The primary structure comprises 151 residues: Protein Turandot Z (151 aa).

The first 23 residues, 1–23 (MSRLIHLSFVLALLACLTGPISA), serve as a signal peptide directing secretion.

The protein belongs to the Turandot family.

Its subcellular location is the secreted. In terms of biological role, a humoral factor that may play a role in stress tolerance. The protein is Protein Turandot Z of Drosophila pseudoobscura pseudoobscura (Fruit fly).